Here is a 1909-residue protein sequence, read N- to C-terminus: DENN domain-containing protein 4C (1909 aa).

The MABP domain occupies Lys-40–Val-199. Positions Val-191 to Pro-364 constitute a uDENN domain. One can recognise a cDENN domain in the interval Pro-385–Lys-521. The region spanning Leu-523 to Gly-641 is the dDENN domain. Ser-703, Ser-737, and Ser-741 each carry phosphoserine. The stretch at Val-821 to Ala-855 is one PPR repeat. 4 positions are modified to phosphoserine: Glu-953, Ser-965, Ser-968, and Ser-973. Thr-975 is subject to Phosphothreonine. A phosphoserine mark is found at Ser-989, Ser-996, Ser-1003, Ser-1046, Ser-1061, Ser-1099, Ser-1126, Ser-1184, Ser-1225, Ser-1244, Ser-1252, and Ser-1278. Disordered regions lie at residues Lys-1243–Ser-1263 and Ser-1277–Leu-1338. The span at Ser-1296 to Ser-1316 shows a compositional bias: polar residues. Residues Ser-1325, Ser-1337, and Ser-1346 each carry the phosphoserine modification. Positions Ser-1419–Thr-1474 are disordered. Positions Leu-1426–Gly-1440 are enriched in low complexity. Basic and acidic residues predominate over residues Lys-1459–His-1468. Phosphoserine occurs at positions 1623, 1627, 1629, 1640, and 1799.

In terms of processing, phosphorylated in response to insulin.

The protein localises to the cytoplasmic vesicle membrane. It is found in the cell membrane. The protein resides in the cytoplasm. Its subcellular location is the cytosol. Functionally, guanine nucleotide exchange factor (GEF) activating RAB10. Promotes the exchange of GDP to GTP, converting inactive GDP-bound RAB10 into its active GTP-bound form. Thereby, stimulates SLC2A4/GLUT4 glucose transporter-enriched vesicles delivery to the plasma membrane in response to insulin. In Homo sapiens (Human), this protein is DENN domain-containing protein 4C (DENND4C).